The sequence spans 488 residues: Ribulose bisphosphate carboxylase large chain (488 aa).

Substrate is bound by residues Asn127 and Thr177. Lys179 serves as the catalytic Proton acceptor. Residue Lys181 participates in substrate binding. Mg(2+) is bound by residues Lys205, Asp207, and Glu208. An N6-carboxylysine modification is found at Lys205. The Proton acceptor role is filled by His297. Residues Arg298, His330, and Ser382 each coordinate substrate.

Belongs to the RuBisCO large chain family. Type I subfamily. As to quaternary structure, heterohexadecamer of 8 large chains and 8 small chains. Mg(2+) is required as a cofactor.

It is found in the plastid. The protein resides in the chloroplast. It carries out the reaction 2 (2R)-3-phosphoglycerate + 2 H(+) = D-ribulose 1,5-bisphosphate + CO2 + H2O. The catalysed reaction is D-ribulose 1,5-bisphosphate + O2 = 2-phosphoglycolate + (2R)-3-phosphoglycerate + 2 H(+). RuBisCO catalyzes two reactions: the carboxylation of D-ribulose 1,5-bisphosphate, the primary event in carbon dioxide fixation, as well as the oxidative fragmentation of the pentose substrate in the photorespiration process. Both reactions occur simultaneously and in competition at the same active site. The protein is Ribulose bisphosphate carboxylase large chain of Porphyra purpurea (Red seaweed).